The sequence spans 301 residues: N-acetylmuramic acid 6-phosphate etherase (301 aa).

An SIS domain is found at 57 to 220 (ITEAFKKGGR…TTGAMIRSGK (164 aa)). The Proton donor role is filled by glutamate 85. Residue glutamate 116 is part of the active site.

This sequence belongs to the GCKR-like family. MurNAc-6-P etherase subfamily. As to quaternary structure, homodimer.

The catalysed reaction is N-acetyl-D-muramate 6-phosphate + H2O = N-acetyl-D-glucosamine 6-phosphate + (R)-lactate. The protein operates within amino-sugar metabolism; 1,6-anhydro-N-acetylmuramate degradation. Its pathway is amino-sugar metabolism; N-acetylmuramate degradation. It participates in cell wall biogenesis; peptidoglycan recycling. Its function is as follows. Specifically catalyzes the cleavage of the D-lactyl ether substituent of MurNAc 6-phosphate, producing GlcNAc 6-phosphate and D-lactate. Together with AnmK, is also required for the utilization of anhydro-N-acetylmuramic acid (anhMurNAc) either imported from the medium or derived from its own cell wall murein, and thus plays a role in cell wall recycling. The sequence is that of N-acetylmuramic acid 6-phosphate etherase from Photobacterium profundum (strain SS9).